A 513-amino-acid chain; its full sequence is Cytochrome P450 monooxygenase asaD (513 aa).

A helical membrane pass occupies residues 14-34 (ILYPFLFGIFAVASLCIATLL). N-linked (GlcNAc...) asparagine glycosylation is found at asparagine 258, asparagine 370, asparagine 431, and asparagine 441. Heme is bound at residue cysteine 461.

Belongs to the cytochrome P450 family. Heme is required as a cofactor.

The protein resides in the membrane. It functions in the pathway secondary metabolite biosynthesis. Functionally, cytochrome P450 monooxygenase; part of the gene cluster that mediates the biosynthesis of aspergillic acid, a hydroxamic acid-containing pyrazinone with aliphatic side chains that originates from leucine (Leu) and isoleucine (Ile). Aspergillic acid has antibiotic properties and was shown to be lethal to mice. The first step in the pathway is the production of deoxyaspergillic acid via a condensation between the Ile amine and the Leu carboxylic acid, followed by a reductive release from the protein forming the dipeptide aldehyde NH(2)-Leu-Ile-CHO, which could undergo an intermolecular cyclization resulting in a dihydropyrazinone. As the NRPS asaC lacks a condensation domain, it is improbable that it is responsible for condensation of Leu and Ile. One possibility is that asaC acts on a previously condensed dipeptide and functions as a Leu-Ile reductase to yield deoxyaspergillic acid. After asaC forms deoxyaspergillic acid, the cytochrome P450 asaD oxidizes the pyrazinone to the hydroxamic acid-containing bioactive metabolite aspergillic acid. The hydroxylase/desaturase asaB can then convert aspergillic acid to hydroxyaspergillic acid. Both aspergillic acid and hydroxyaspergillic acid can form complexes with iron producing ferriaspergillin analogs. The protein is Cytochrome P450 monooxygenase asaD of Aspergillus flavus (strain ATCC 200026 / FGSC A1120 / IAM 13836 / NRRL 3357 / JCM 12722 / SRRC 167).